A 337-amino-acid chain; its full sequence is GTPase Obg (337 aa).

Positions 1-159 (MDFIDEVKLY…RNIVLKLKVL (159 aa)) constitute an Obg domain. The region spanning 160–329 (SDVGIIGMPN…LNEKVKTKEI (170 aa)) is the OBG-type G domain. Residues 166-173 (GMPNVGKS), 191-195 (FTTIR), 212-215 (DIPG), 279-282 (NKCD), and 310-312 (DDD) each bind GTP. Mg(2+)-binding residues include S173 and T193.

This sequence belongs to the TRAFAC class OBG-HflX-like GTPase superfamily. OBG GTPase family. Monomer. The cofactor is Mg(2+).

The protein resides in the cytoplasm. In terms of biological role, an essential GTPase which binds GTP, GDP and possibly (p)ppGpp with moderate affinity, with high nucleotide exchange rates and a fairly low GTP hydrolysis rate. Plays a role in control of the cell cycle, stress response, ribosome biogenesis and in those bacteria that undergo differentiation, in morphogenesis control. The sequence is that of GTPase Obg from Wolbachia pipientis subsp. Culex pipiens (strain wPip).